The chain runs to 299 residues: Endonuclease 4 (299 aa).

Residues 1–24 (MSSSLRQWFARVLVLTQLINGALC) form the signal peptide. Residues Trp-25 and His-30 each coordinate a divalent metal cation. 25-30 (WGKEGH) provides a ligand contact to substrate. Cys-34 and Cys-65 are joined by a disulfide. 2 residues coordinate a divalent metal cation: Asp-69 and His-84. Residues 69-75 (DEIKHHW), 84-87 (HYVD), and 94-99 (NYEYCR) contribute to the substrate site. Cystine bridges form between Cys-93–Cys-246, Cys-101–Cys-111, and Cys-226–Cys-233. Substrate-binding residues include Asn-118 and Tyr-136. A glycan (N-linked (GlcNAc...) asparagine) is linked at Asn-118. Asn-137 carries N-linked (GlcNAc...) asparagine glycosylation. Positions 147, 151, 157, 181, and 185 each coordinate a divalent metal cation. The segment at 147-196 (HFIGDIHQPLHVGFLGDEGGNTITVRWYRRKTNLHHVWDNMIIESALKTY) is substrate binding. N-linked (GlcNAc...) asparagine glycans are attached at residues Asn-198, Asn-211, and Asn-229. The propeptide at 284-299 (ATLNRIFSSKPKHAGS) is removed in mature form.

Belongs to the nuclease type I family. As to quaternary structure, monomer. Requires Mn(2+) as cofactor. The cofactor is Ca(2+).

It carries out the reaction Endonucleolytic cleavage to 5'-phosphomononucleotide and 5'-phosphooligonucleotide end-products.. In terms of biological role, endonuclease that can use single-stranded RNA and DNA as substrates. In contradiction with PubMed:23620482, cannot hydrolyze single-stranded DNA and does not cleave mismatches. The polypeptide is Endonuclease 4 (Arabidopsis thaliana (Mouse-ear cress)).